A 274-amino-acid chain; its full sequence is Large ribosomal subunit protein uL2cz (274 aa).

Disordered regions lie at residues 1 to 25 and 224 to 274; these read MAIHLYKTSTPSTRNGTVDSQVKSN and NPVD…RRSK. The span at 7 to 25 shows a compositional bias: polar residues; it reads KTSTPSTRNGTVDSQVKSN.

It belongs to the universal ribosomal protein uL2 family. Part of the 50S ribosomal subunit.

The protein localises to the plastid. It is found in the chloroplast. In Coffea arabica (Arabian coffee), this protein is Large ribosomal subunit protein uL2cz (rpl2-A).